A 345-amino-acid polypeptide reads, in one-letter code: Low-density lipoprotein receptor class A domain-containing protein 3 (345 aa).

Positions Met1–Ser17 are cleaved as a signal peptide. Over Gln18 to Thr173 the chain is Extracellular. N-linked (GlcNAc...) asparagine glycosylation occurs at Asn24. 3 LDL-receptor class A domains span residues Glu28–Pro65, Lys70–Thr107, and Leu112–Glu148. Intrachain disulfides connect Cys29–Cys42, Cys37–Cys55, Cys49–Cys64, Cys71–Cys84, Cys78–Cys97, Cys91–Cys106, Cys113–Cys125, Cys120–Cys138, and Cys132–Cys147. The (Microbial infection) Interaction with Venezuelan equine encephalitis virus/VEEV spike proteins E1 and E2 stretch occupies residues Asn30 to Asp57. A helical transmembrane segment spans residues Tyr174–Leu194. The Cytoplasmic portion of the chain corresponds to His195–Val345. Short sequence motifs (involved in ITCH interaction) lie at residues Pro256–Tyr259 and Pro275–Tyr278. The disordered stretch occupies residues Trp270–Val345. Residues Ser295–Ser313 show a composition bias toward low complexity.

It belongs to the LDLR family. As to quaternary structure, interacts with APP precursor C-terminus. Interacts directly with ITCH; this interaction promotes ITCH auto-ubiquitination leading to its degradation. Interacts directly with NEDD4; this interaction promotes NEDD4 auto-ubiquitination. Interacts directly with NEDD4L. (Microbial infection) Interacts (via domain LDL-receptor class A 1) with Venezuelan equine encephalitis virus/VEEV spike proteins E1 and E2. As to expression, expressed at high levels in brain, lung, skeletal muscle, and pancreas. Expressed at moderate levels in heart, placenta, and kidney but not detected in the liver.

It localises to the cell membrane. In terms of biological role, may influence APP processing, resulting in a decrease in sAPP-alpha production and increased amyloidogenic P3 peptide production. May regulate ITCH and NEDD4 E3 ligase activity and degradation. (Microbial infection) Acts as a receptor for Venezuelan equine encephalitis virus. This Homo sapiens (Human) protein is Low-density lipoprotein receptor class A domain-containing protein 3.